The chain runs to 292 residues: Ubiquinone biosynthesis protein UbiV (292 aa).

Residues cysteine 39, cysteine 180, cysteine 193, and cysteine 197 each coordinate [4Fe-4S] cluster.

The protein belongs to the peptidase U32 family. UbiV subfamily. As to quaternary structure, forms a heterodimer with UbiU. The cofactor is [4Fe-4S] cluster.

It functions in the pathway cofactor biosynthesis; ubiquinone biosynthesis. Its function is as follows. Required for O(2)-independent ubiquinone (coenzyme Q) biosynthesis. Together with UbiU, is essential for the C6-hydroxylation reaction in the oxygen-independent ubiquinone biosynthesis pathway. The protein is Ubiquinone biosynthesis protein UbiV of Escherichia coli (strain K12).